Reading from the N-terminus, the 170-residue chain is Small ribosomal subunit protein uS4 (170 aa).

Positions 100–164 constitute an S4 RNA-binding domain; the sequence is RRLQTVVYRE…SDLTDELHPA (65 aa).

This sequence belongs to the universal ribosomal protein uS4 family. As to quaternary structure, part of the 30S ribosomal subunit. Contacts protein S5. The interaction surface between S4 and S5 is involved in control of translational fidelity.

Its function is as follows. One of the primary rRNA binding proteins, it binds directly to 16S rRNA where it nucleates assembly of the body of the 30S subunit. With S5 and S12 plays an important role in translational accuracy. This Halobacterium salinarum (strain ATCC 29341 / DSM 671 / R1) protein is Small ribosomal subunit protein uS4.